A 418-amino-acid polypeptide reads, in one-letter code: Acyl-[acyl-carrier-protein] desaturase 4, chloroplastic (418 aa).

The transit peptide at 1 to 70 (MASSGLAVAA…ATAAAPADTA (70 aa)) directs the protein to the chloroplast. 6 residues coordinate Fe cation: Glu-152, Glu-190, His-193, Glu-243, Glu-276, and His-279.

It belongs to the fatty acid desaturase type 2 family. In terms of assembly, homodimer. Fe(2+) serves as cofactor.

The protein localises to the plastid. It localises to the chloroplast. It functions in the pathway lipid metabolism; fatty acid metabolism. Introduces a cis double bond in the acyl chain of an acyl-[acyl-carrier protein]. The sequence is that of Acyl-[acyl-carrier-protein] desaturase 4, chloroplastic from Oryza sativa subsp. japonica (Rice).